Here is a 565-residue protein sequence, read N- to C-terminus: Periplasmic trehalase (565 aa).

An N-terminal signal peptide occupies residues Met-1 to Ala-30. Residues Arg-152, Trp-159–Asp-160, Asn-196, Arg-205–Gln-207, Arg-277–Glu-279, and Gly-310 each bind substrate. Active-site proton donor/acceptor residues include Asp-312 and Glu-496. Substrate is bound at residue Glu-511. Residues Pro-538 to Pro-565 form a disordered region. Residues Thr-548–Pro-565 are compositionally biased toward polar residues.

It belongs to the glycosyl hydrolase 37 family. In terms of assembly, monomer.

The protein resides in the periplasm. The enzyme catalyses alpha,alpha-trehalose + H2O = alpha-D-glucose + beta-D-glucose. Functionally, provides the cells with the ability to utilize trehalose at high osmolarity by splitting it into glucose molecules that can subsequently be taken up by the phosphotransferase-mediated uptake system. The chain is Periplasmic trehalase from Escherichia coli (strain K12 / MC4100 / BW2952).